Reading from the N-terminus, the 353-residue chain is Phenol hydroxylase P5 protein (353 aa).

The 2Fe-2S ferredoxin-type domain occupies 3-93; that stretch reads YQVTIEPIGT…DMVIEADVDE (91 aa). The [2Fe-2S] cluster site is built by C37, C42, C45, and C77. The FAD-binding FR-type domain occupies 102 to 201; sequence VQDYQATVIE…SGPYGQFFVR (100 aa).

As to quaternary structure, the multicomponent enzyme phenol hydroxylase is formed by P0, P1, P2, P3, P4 and P5 polypeptides. It depends on FAD as a cofactor. [2Fe-2S] cluster is required as a cofactor.

The enzyme catalyses phenol + NADPH + O2 + H(+) = catechol + NADP(+) + H2O. Its pathway is aromatic compound metabolism; phenol degradation. Its function is as follows. Catabolizes phenol, and some of its methylated derivatives. P5 is required for growth on phenol, and for in vitro phenol hydroxylase activity. Functionally, probable electron transfer from NADPH, via FAD and the 2Fe-2S center, to the oxygenase activity site of the enzyme. The sequence is that of Phenol hydroxylase P5 protein (mphP) from Acinetobacter pittii (strain PHEA-2).